The following is a 545-amino-acid chain: MQLPAMSCSPSQSSAAAAAAYGCCQRILLASTSLPATGRPARLGLKLRSTHSLQIRNRRFVCQAMTETEPDGDGNGDEEKEELGDDASSPSVYSVTQENGSAESETNADNTKDETVNTEPLSSSDTVQNIDGDATPASDAQENVEVVDVAVGSPLPGMKQQLDESVRIPKATIDILKDQVFGFDTFFVTSQEPYEGGILFKGNLRGQPAKSYEKITNRLQNKFGDQYKLFLLINPEDDKPVAVVVPRQTLQPETTAVPEWFAAASFGVVTIFTLLLRNVPLLQDNLLSTFDNLELLKDGVYGALVTAAIIGVHEIAHILAARDTGIKLAVPYFVPSWQIGSFGAITRIVNIVRNREDLLKVAAAGPLAGFSLGFVLLLLGFILPPSDGLGLVIDPAVFHESFLVGGLAKLILGDALKEGTKLSINPLVLWAWAGLLINAINSIPAGELDGGRIAFAMWGRKISSRISSLAIGLLGISALFNDVAFYWVVLIFFLQRGPISPLSEEITEPENNYISIGVAILLFGLLVCLPYPFPFDPSQLTDFDL.

The N-terminal 63 residues, 1–63, are a transit peptide targeting the chloroplast; it reads MQLPAMSCSP…QIRNRRFVCQ (63 aa). A disordered region spans residues 66–142; sequence TETEPDGDGN…DATPASDAQE (77 aa). Over residues 68-85 the composition is skewed to acidic residues; it reads TEPDGDGNGDEEKEELGD. Composition is skewed to polar residues over residues 88–109 and 117–129; these read SSPS…TNAD and NTEP…TVQN. 7 helical membrane passes run 256 to 276, 300 to 320, 325 to 345, 363 to 383, 426 to 446, 473 to 493, and 513 to 533; these read AVPE…TLLL, VYGA…HILA, GIKL…FGAI, AAGP…GFIL, PLVL…IPAG, LLGI…LIFF, and YISI…PYPF.

This sequence belongs to the peptidase M50B family.

It localises to the plastid. It is found in the chloroplast membrane. Probable membrane-associated metalloprotease that may be involved in chloroplast development. The sequence is that of Probable zinc metalloprotease EGY2, chloroplastic (EGY2) from Oryza sativa subsp. indica (Rice).